We begin with the raw amino-acid sequence, 537 residues long: Tyrosine-protein kinase Fyn (537 aa).

Residue G2 is the site of N-myristoyl glycine attachment. Residues C3 and C6 are each lipidated (S-palmitoyl cysteine). T12 carries the post-translational modification Phosphothreonine; by PKC. The tract at residues 14–35 (LTEERDGSLNQSSGYRYGTDPT) is disordered. Phosphoserine occurs at positions 21 and 26. An SH3 domain is found at 82–143 (TGVTLFVALY…PSNYVAPVDS (62 aa)). The SH2 domain occupies 149 to 246 (WYFGKLGRKD…GLCCRLVVPC (98 aa)). Y185 bears the Phosphotyrosine mark. The region spanning 271–524 (LQLIKRLGNG…YLQSFLEDYF (254 aa)) is the Protein kinase domain. ATP contacts are provided by residues 277-285 (LGNGQFGEV) and K299. The active-site Proton acceptor is the D390. Phosphotyrosine; by autocatalysis is present on Y420. Y531 is modified (phosphotyrosine; by CSK).

The protein belongs to the protein kinase superfamily. Tyr protein kinase family. SRC subfamily. Interacts (via its SH3 domain) with PIK3R1 and PRMT8. Interacts with FYB1, PAG1, and SH2D1A. Interacts with CD79A (tyrosine-phosphorylated form); the interaction increases FYN activity. Interacts (via SH2 domain) with CSF1R (tyrosine phosphorylated). Interacts with TOM1L1 (phosphorylated form). Interacts with KDR (tyrosine phosphorylated). Interacts (via SH3 domain) with KLHL2 (via N-terminus). Interacts with SH2D1A and SLAMF1. Interacts with ITCH; the interaction phosphorylates ITCH and negatively regulates its activity. Interacts with FASLG. Interacts with RUNX3. Interacts with KIT. Interacts with EPHA8; possible downstream effector of EPHA8 in regulation of cell adhesion. Interacts with PTK2/FAK1; this interaction leads to PTK2/FAK1 phosphorylation and activation. Interacts with CAV1; this interaction couples integrins to the Ras-ERK pathway. Interacts with UNC119. Interacts (via SH2 domain) with PTPRH (phosphorylated form). Interacts with PTPRO (phosphorylated form). Interacts with PTPRB (phosphorylated form). Interacts with FYB2. Interacts with DSCAM. Interacts with SKAP1 and FYB1; this interaction promotes the phosphorylation of CLNK. Interacts with NEDD9; in the presence of PTK2. As to quaternary structure, (Microbial infection) Interacts (via its SH3 domain) with hepatitis E virus/HEV protein ORF3. Mn(2+) is required as a cofactor. In terms of processing, autophosphorylated at Tyr-420. Phosphorylation on the C-terminal tail at Tyr-531 by CSK maintains the enzyme in an inactive state. PTPRC/CD45 dephosphorylates Tyr-531 leading to activation. Ultraviolet B (UVB) strongly increase phosphorylation at Thr-12 and kinase activity, and promotes translocation from the cytoplasm to the nucleus. Dephosphorylation at Tyr-420 by PTPN2 negatively regulates T-cell receptor signaling. Phosphorylated at tyrosine residues, which can be enhanced by NTN1. Post-translationally, palmitoylated. Palmitoylation at Cys-3 and Cys-6, probably by ZDHHC21, regulates subcellular location. As to expression, isoform 1 is highly expressed in the brain. Isoform 2 is expressed in cells of hemopoietic lineages, especially T-lymphocytes.

The protein resides in the cytoplasm. The protein localises to the nucleus. It is found in the cell membrane. It localises to the perikaryon. The catalysed reaction is L-tyrosyl-[protein] + ATP = O-phospho-L-tyrosyl-[protein] + ADP + H(+). Inhibited by phosphorylation of Tyr-531 by leukocyte common antigen and activated by dephosphorylation of this site. Its function is as follows. Non-receptor tyrosine-protein kinase that plays a role in many biological processes including regulation of cell growth and survival, cell adhesion, integrin-mediated signaling, cytoskeletal remodeling, cell motility, immune response and axon guidance. Inactive FYN is phosphorylated on its C-terminal tail within the catalytic domain. Following activation by PKA, the protein subsequently associates with PTK2/FAK1, allowing PTK2/FAK1 phosphorylation, activation and targeting to focal adhesions. Involved in the regulation of cell adhesion and motility through phosphorylation of CTNNB1 (beta-catenin) and CTNND1 (delta-catenin). Regulates cytoskeletal remodeling by phosphorylating several proteins including the actin regulator WAS and the microtubule-associated proteins MAP2 and MAPT. Promotes cell survival by phosphorylating AGAP2/PIKE-A and preventing its apoptotic cleavage. Participates in signal transduction pathways that regulate the integrity of the glomerular slit diaphragm (an essential part of the glomerular filter of the kidney) by phosphorylating several slit diaphragm components including NPHS1, KIRREL1 and TRPC6. Plays a role in neural processes by phosphorylating DPYSL2, a multifunctional adapter protein within the central nervous system, ARHGAP32, a regulator for Rho family GTPases implicated in various neural functions, and SNCA, a small pre-synaptic protein. Involved in reelin signaling by mediating phosphorylation of DAB1 following reelin (RELN)-binding to its receptor. Participates in the downstream signaling pathways that lead to T-cell differentiation and proliferation following T-cell receptor (TCR) stimulation. Phosphorylates PTK2B/PYK2 in response to T-cell receptor activation. Also participates in negative feedback regulation of TCR signaling through phosphorylation of PAG1, thereby promoting interaction between PAG1 and CSK and recruitment of CSK to lipid rafts. CSK maintains LCK and FYN in an inactive form. Promotes CD28-induced phosphorylation of VAV1. In mast cells, phosphorylates CLNK after activation of immunoglobulin epsilon receptor signaling. Can also promote CD244-mediated NK cell activation. The polypeptide is Tyrosine-protein kinase Fyn (FYN) (Homo sapiens (Human)).